The sequence spans 840 residues: Ubiquitin carboxyl-terminal hydrolase 20 (840 aa).

The UBP-type; degenerate zinc finger occupies 6 to 117; it reads DFCPHLDSIG…NSCYMNAALQ (112 aa). Residues Cys-30, Cys-33, Cys-53, and His-60 each coordinate Zn(2+). Residues 101–611 enclose the USP domain; the sequence is TGMKNIGNSC…EAYVLFYRKS (511 aa). Cys-110 functions as the Nucleophile in the catalytic mechanism. Disordered regions lie at residues 205 to 254 and 315 to 342; these read EPIL…GGVG and HCSS…SSPL. Positions 220–230 are enriched in basic and acidic residues; that stretch reads DDQREGERGGT. A compositionally biased stretch (gly residues) spans 242 to 254; that stretch reads GEMGDGEGGGGVG. Residues 333–342 show a composition bias toward low complexity; sequence SSTPPRSSPL. The Proton acceptor role is filled by His-569. DUSP domains lie at 613 to 706 and 715 to 818; these read EEAE…LYVC and ALAK…RQTV.

Belongs to the peptidase C19 family. USP20/USP33 subfamily.

It is found in the cytoplasm. Its subcellular location is the perinuclear region. The protein resides in the cytoskeleton. The protein localises to the microtubule organizing center. It localises to the centrosome. The enzyme catalyses Thiol-dependent hydrolysis of ester, thioester, amide, peptide and isopeptide bonds formed by the C-terminal Gly of ubiquitin (a 76-residue protein attached to proteins as an intracellular targeting signal).. Its function is as follows. Deubiquitinating enzyme involved in beta-2 adrenergic receptor (adrb2) recycling. Acts as a regulator of G-protein coupled receptor (GPCR) signaling by mediating the deubiquitination beta-2 adrenergic receptor (adrb2). Plays a central role in adrb2 recycling and resensitization after prolonged agonist stimulation by constitutively binding adrb2, mediating deubiquitination of adrb2 and inhibiting lysosomal trafficking of adrb2. Mediates deubiquitination of both 'Lys-48'- and 'Lys-63'-linked polyubiquitin chains. The polypeptide is Ubiquitin carboxyl-terminal hydrolase 20 (usp20) (Xenopus laevis (African clawed frog)).